An 802-amino-acid chain; its full sequence is Leucine--tRNA ligase (802 aa).

The 'HIGH' region motif lies at 40-51; sequence PYPSGAGLHVGH. Residues 576–580 carry the 'KMSKS' region motif; it reads KMSKS. Lys579 provides a ligand contact to ATP.

Belongs to the class-I aminoacyl-tRNA synthetase family.

The protein localises to the cytoplasm. It carries out the reaction tRNA(Leu) + L-leucine + ATP = L-leucyl-tRNA(Leu) + AMP + diphosphate. This chain is Leucine--tRNA ligase, found in Bacillus thuringiensis subsp. konkukian (strain 97-27).